Consider the following 204-residue polypeptide: Endothelin-3 (204 aa).

The first 17 residues, 1–17 (MELRLWFLFGLTVTSAA), serve as a signal peptide directing secretion. A disordered region spans residues 18-71 (GPVPRPQPGDAGRSGVPRAPSATKETMAMVATRGPSPRSSGQEQEPGPFGELAA). Positions 18–80 (GPVPRPQPGD…AKGGPVRYRA (63 aa)) are excised as a propeptide. 2 disulfide bridges follow: cysteine 83–cysteine 97 and cysteine 85–cysteine 93. Residues 104 to 204 (INTPERTVPY…KSRTDKARRL (101 aa)) constitute a propeptide that is removed on maturation. Residues 115–140 (LSNHRGSVRGRRSAGPSPQSSQPSRG) form a disordered region. Residues 127 to 140 (SAGPSPQSSQPSRG) are compositionally biased toward low complexity. Residues 144–158 (CACAESQDRACVYFC) are endothelin-like. Residues 166–204 (GASRTPETPDKEAGKPAGRATGGLHPRRLKSRTDKARRL) are disordered.

The protein belongs to the endothelin/sarafotoxin family.

It is found in the secreted. Its function is as follows. Endothelins are endothelium-derived vasoconstrictor peptides. This chain is Endothelin-3 (EDN3), found in Sus scrofa (Pig).